Consider the following 131-residue polypeptide: Glycine cleavage system H protein (131 aa).

The region spanning Thr24–Arg106 is the Lipoyl-binding domain. At Lys65 the chain carries N6-lipoyllysine.

Belongs to the GcvH family. As to quaternary structure, the glycine cleavage system is composed of four proteins: P, T, L and H. Requires (R)-lipoate as cofactor.

Functionally, the glycine cleavage system catalyzes the degradation of glycine. The H protein shuttles the methylamine group of glycine from the P protein to the T protein. The sequence is that of Glycine cleavage system H protein from Mycolicibacterium smegmatis (strain ATCC 700084 / mc(2)155) (Mycobacterium smegmatis).